We begin with the raw amino-acid sequence, 177 residues long: Transcription factor E (177 aa).

The region spanning 9–91 is the HTH TFE/IIEalpha-type domain; that stretch reads VEELLNELVG…YWRINYDKAL (83 aa).

Belongs to the TFE family. In terms of assembly, monomer. Interaction with RNA polymerase subunits RpoF and RpoE is necessary for Tfe stimulatory transcription activity. Able to interact with Tbp and RNA polymerase in the absence of DNA promoter. Interacts both with the preinitiation and elongation complexes.

In terms of biological role, transcription factor that plays a role in the activation of archaeal genes transcribed by RNA polymerase. Facilitates transcription initiation by enhancing TATA-box recognition by TATA-box-binding protein (Tbp), and transcription factor B (Tfb) and RNA polymerase recruitment. Not absolutely required for transcription in vitro, but particularly important in cases where Tbp or Tfb function is not optimal. It dynamically alters the nucleic acid-binding properties of RNA polymerases by stabilizing the initiation complex and destabilizing elongation complexes. Seems to translocate with the RNA polymerase following initiation and acts by binding to the non template strand of the transcription bubble in elongation complexes. The chain is Transcription factor E from Archaeoglobus fulgidus (strain ATCC 49558 / DSM 4304 / JCM 9628 / NBRC 100126 / VC-16).